The sequence spans 60 residues: Conotoxin VnMRCL-012 (60 aa).

An N-terminal signal peptide occupies residues 1–22 (MRCLPVFVILLLLIASAPGVDA). Residues 23–50 (QPKTKYDVPLASRHDFAKKTPKRLSKPR) constitute a propeptide that is removed on maturation.

The protein belongs to the conotoxin T superfamily. Contains 2 disulfide bonds that can be either 'C1-C3, C2-C4' or 'C1-C4, C2-C3', since these disulfide connectivities have been observed for conotoxins with cysteine framework V (for examples, see AC P0DQQ7 and AC P81755). As to expression, expressed by the venom duct.

The protein resides in the secreted. This chain is Conotoxin VnMRCL-012, found in Conus ventricosus (Mediterranean cone).